Here is a 529-residue protein sequence, read N- to C-terminus: Peptide chain release factor 3 (529 aa).

Positions 10–278 (ARRRTFAIIS…NFVDLAPAPR (269 aa)) constitute a tr-type G domain. GTP is bound by residues 19-26 (SHPDAGKT), 87-91 (DTPGH), and 141-144 (NKLD).

Belongs to the TRAFAC class translation factor GTPase superfamily. Classic translation factor GTPase family. PrfC subfamily.

It localises to the cytoplasm. Its function is as follows. Increases the formation of ribosomal termination complexes and stimulates activities of RF-1 and RF-2. It binds guanine nucleotides and has strong preference for UGA stop codons. It may interact directly with the ribosome. The stimulation of RF-1 and RF-2 is significantly reduced by GTP and GDP, but not by GMP. This chain is Peptide chain release factor 3, found in Nitratidesulfovibrio vulgaris (strain ATCC 29579 / DSM 644 / CCUG 34227 / NCIMB 8303 / VKM B-1760 / Hildenborough) (Desulfovibrio vulgaris).